The following is a 151-amino-acid chain: Small ribosomal subunit protein uS15 (151 aa).

Residues 1 to 11 (MPHRSRHKKGR) are compositionally biased toward basic residues. A disordered region spans residues 1–24 (MPHRSRHKKGRSSSVRPPHPTVPT).

Belongs to the universal ribosomal protein uS15 family. Part of the 30S ribosomal subunit.

The protein is Small ribosomal subunit protein uS15 of Pyrobaculum calidifontis (strain DSM 21063 / JCM 11548 / VA1).